Consider the following 195-residue polypeptide: Large ribosomal subunit protein bL32m (195 aa).

Cys95, Cys98, Cys108, and Cys111 together coordinate Zn(2+).

Belongs to the bacterial ribosomal protein bL32 family. As to quaternary structure, component of the mitochondrial large ribosomal subunit (mt-LSU).

Its subcellular location is the mitochondrion. Its function is as follows. Component of the mitochondrial large ribosomal subunit (mt-LSU). The mitochondrial ribosome (mitoribosome) is a large ribonucleoprotein complex responsible for the synthesis of proteins inside mitochondria. The polypeptide is Large ribosomal subunit protein bL32m (mRpL32) (Drosophila melanogaster (Fruit fly)).